A 709-amino-acid polypeptide reads, in one-letter code: Septu protein PtuA (709 aa).

Component of antiviral defense system Septu type II, composed of PtuA and PtuB. Expression of Septu type II in B.subtilis (strain BEST7003) confers resistance to phages SBSphiC and SpBeta. May be an ATPase. The chain is Septu protein PtuA from Bacillus mycoides (strain KBAB4) (Bacillus weihenstephanensis).